Here is a 643-residue protein sequence, read N- to C-terminus: DNA-directed RNA polymerase subunit beta' (643 aa).

Cysteine 83, cysteine 85, cysteine 98, and cysteine 101 together coordinate Zn(2+). The Mg(2+) site is built by aspartate 480, aspartate 482, and aspartate 484.

The protein belongs to the RNA polymerase beta' chain family. RpoC1 subfamily. In plastids the minimal PEP RNA polymerase catalytic core is composed of four subunits: alpha, beta, beta', and beta''. When a (nuclear-encoded) sigma factor is associated with the core the holoenzyme is formed, which can initiate transcription. Requires Mg(2+) as cofactor. The cofactor is Zn(2+).

The protein localises to the plastid. It is found in the organellar chromatophore. The enzyme catalyses RNA(n) + a ribonucleoside 5'-triphosphate = RNA(n+1) + diphosphate. Functionally, DNA-dependent RNA polymerase catalyzes the transcription of DNA into RNA using the four ribonucleoside triphosphates as substrates. The sequence is that of DNA-directed RNA polymerase subunit beta' from Paulinella chromatophora.